A 933-amino-acid polypeptide reads, in one-letter code: Phosphoenolpyruvate carboxylase (933 aa).

Residues H158 and K592 contribute to the active site.

Belongs to the PEPCase type 1 family. Requires Mg(2+) as cofactor.

It carries out the reaction oxaloacetate + phosphate = phosphoenolpyruvate + hydrogencarbonate. Its function is as follows. Forms oxaloacetate, a four-carbon dicarboxylic acid source for the tricarboxylic acid cycle. The protein is Phosphoenolpyruvate carboxylase of Nitrosomonas europaea (strain ATCC 19718 / CIP 103999 / KCTC 2705 / NBRC 14298).